Reading from the N-terminus, the 163-residue chain is tRNA-acetylating toxin 2 (163 aa).

The active site involves Tyr137.

It belongs to the acetyltransferase family. GNAT subfamily. As to quaternary structure, homodimer. Forms a complex with cognate antitoxin TacA2.

The catalysed reaction is glycyl-tRNA(Gly) + acetyl-CoA = N-acetylglycyl-tRNA(Gly) + CoA + H(+). It carries out the reaction L-isoleucyl-tRNA(Ile) + acetyl-CoA = N-acetyl-L-isoleucyl-tRNA(Ile) + CoA + H(+). It catalyses the reaction L-leucyl-tRNA(Leu) + acetyl-CoA = N-acetyl-L-leucyl-tRNA(Leu) + CoA + H(+). Toxic component of a type II toxin-antitoxin (TA) system. Acetylates tRNA and inhibits translation. Acetylates mainly Gly and Ile/Leu in vitro. Overexpression during the lag phase of a tacA2-tacT2 deletion strain leads to a 100-fold increase in persister cells in the presence of cefotaxime and a non-growth state in the absence of antibiotic. This protein, which has a single amino acid compared to S.typhimurium strain 14028s (Lys-29 is Glu in 14028s), produces 100-fold more persister cells, has much higher acetylation activity and binds tRNA much better. Persister cell formation and the growth defect are neutralized by cognate antitoxin TacA2. Functionally, the TacA2-TacT2 complex both represses and derepresses expression of its own operon. The protein is tRNA-acetylating toxin 2 of Salmonella enteritidis.